A 443-amino-acid polypeptide reads, in one-letter code: GTPase Der (443 aa).

EngA-type G domains are found at residues 3-168 (PLLA…PEAP) and 178-353 (VHLA…RNRS). Residues 9–16 (GRPNVGKS), 56–60 (DTGGY), 120–123 (NKVE), 184–191 (GRPNVGKS), 231–235 (DTAGL), and 296–299 (NKWD) each bind GTP. The region spanning 354–438 (QNVSTSQLNK…PISLRFLHKN (85 aa)) is the KH-like domain.

The protein belongs to the TRAFAC class TrmE-Era-EngA-EngB-Septin-like GTPase superfamily. EngA (Der) GTPase family. Associates with the 50S ribosomal subunit.

In terms of biological role, GTPase that plays an essential role in the late steps of ribosome biogenesis. This Chlorobium chlorochromatii (strain CaD3) protein is GTPase Der.